The following is a 445-amino-acid chain: Argininosuccinate synthase (445 aa).

ATP contacts are provided by residues 17 to 25 (AFSGGLDTS) and Ala-43. Tyr-99 is an L-citrulline binding site. ATP is bound by residues Gly-129 and Thr-131. L-aspartate is bound by residues Thr-131, Asn-135, and Asp-136. Asn-135 contributes to the L-citrulline binding site. Asp-136 contributes to the ATP binding site. The L-citrulline site is built by Arg-139 and Ser-192. Position 194 (Asp-194) interacts with ATP. L-citrulline-binding residues include Thr-201, Glu-203, and Glu-280.

The protein belongs to the argininosuccinate synthase family. Type 2 subfamily. In terms of assembly, homotetramer.

It localises to the cytoplasm. It carries out the reaction L-citrulline + L-aspartate + ATP = 2-(N(omega)-L-arginino)succinate + AMP + diphosphate + H(+). It functions in the pathway amino-acid biosynthesis; L-arginine biosynthesis; L-arginine from L-ornithine and carbamoyl phosphate: step 2/3. This is Argininosuccinate synthase from Burkholderia cenocepacia (strain ATCC BAA-245 / DSM 16553 / LMG 16656 / NCTC 13227 / J2315 / CF5610) (Burkholderia cepacia (strain J2315)).